The chain runs to 475 residues: Protein arginine N-methyltransferase 2 (475 aa).

Residues 167–194 form a disordered region; sequence EFLSDDDDEEMDVDDDEEDESRDGEETG. The segment covering 169–194 has biased composition (acidic residues); the sequence is LSDDDDEEMDVDDDEEDESRDGEETG. Positions 247–475 constitute an RMT2 domain; the sequence is LAGSQMDYLK…EDFYLPVCTF (229 aa). Residues Tyr254, Met285, 310 to 315, 331 to 333, 358 to 359, and Asp378 each bind S-adenosyl-L-methionine; these read FGLGII, EAH, and WQ.

It belongs to the class I-like SAM-binding methyltransferase superfamily. RMT2 methyltransferase family. In terms of assembly, monomer.

The protein resides in the cytoplasm. It is found in the nucleus. S-adenosyl-L-methionine-dependent protein-arginine N-methyltransferase that methylates the delta-nitrogen atom of arginine residues to form N5-methylarginine (type IV) in target proteins. Monomethylates ribosomal protein L12. This chain is Protein arginine N-methyltransferase 2, found in Yarrowia lipolytica (strain CLIB 122 / E 150) (Yeast).